The sequence spans 431 residues: Adenylosuccinate synthetase (431 aa).

GTP contacts are provided by residues 12–18 (GDEGKGK) and 40–42 (GHT). The Proton acceptor role is filled by Asp-13. Residues Asp-13 and Gly-40 each coordinate Mg(2+). Residues 13–16 (DEGK), 38–41 (NAGH), Thr-128, Arg-142, Gln-223, Thr-238, and Arg-301 contribute to the IMP site. Catalysis depends on His-41, which acts as the Proton donor. 297–303 (TVTGRPR) serves as a coordination point for substrate. Residues Arg-303, 329-331 (SID), and 411-413 (SVG) each bind GTP.

Belongs to the adenylosuccinate synthetase family. In terms of assembly, homodimer. Mg(2+) serves as cofactor.

It is found in the cytoplasm. The enzyme catalyses IMP + L-aspartate + GTP = N(6)-(1,2-dicarboxyethyl)-AMP + GDP + phosphate + 2 H(+). It functions in the pathway purine metabolism; AMP biosynthesis via de novo pathway; AMP from IMP: step 1/2. In terms of biological role, plays an important role in the de novo pathway of purine nucleotide biosynthesis. Catalyzes the first committed step in the biosynthesis of AMP from IMP. In Lacticaseibacillus paracasei (strain ATCC 334 / BCRC 17002 / CCUG 31169 / CIP 107868 / KCTC 3260 / NRRL B-441) (Lactobacillus paracasei), this protein is Adenylosuccinate synthetase.